The sequence spans 222 residues: UPF0441 protein CKO_04429 (222 aa).

Low complexity predominate over residues 177 to 194 (TVPKTAMAPKPATTTTVT). The segment at 177–222 (TVPKTAMAPKPATTTTVTRGGFGESVAKQSTMQRSATGTSNRSMGG) is disordered. Positions 203–222 (AKQSTMQRSATGTSNRSMGG) are enriched in polar residues.

This sequence belongs to the UPF0441 family.

This Citrobacter koseri (strain ATCC BAA-895 / CDC 4225-83 / SGSC4696) protein is UPF0441 protein CKO_04429.